A 1059-amino-acid polypeptide reads, in one-letter code: Zinc finger protein 865 (1059 aa).

3 disordered regions span residues 1–24 (MEAN…EDGV), 58–142 (LPCA…DAAF), and 161–206 (NLKR…CDPT). Gly residues predominate over residues 8-21 (SGAGGGGSSGIGGE). A compositionally biased stretch (pro residues) spans 61–78 (APGPPPQPPPQPPPPQYD). Residues 93–119 (SSSSSSSSSSSSSSSSSSSSSSSSSQA) are compositionally biased toward low complexity. Composition is skewed to pro residues over residues 124–137 (PPLP…PPPL) and 183–198 (APGP…PGPP). 2 C2H2-type zinc fingers span residues 224–246 (FPCG…MLVH) and 252–274 (YECG…RRCH). A disordered region spans residues 275–342 (KDVPPAAGGP…PAGVGVPPPA (68 aa)). Pro residues predominate over residues 281–296 (AGGPPQPGPHLPPLGL). Low complexity-rich tracts occupy residues 297–316 (PAPA…SSGP) and 324–337 (APSA…AGVG). C2H2-type zinc fingers lie at residues 350–372 (FACP…QIIH), 378–400 (FSCS…VKTH), 407–429 (LPCG…QAAH), and 441–463 (YPCD…KAAH). Residues 461–503 (AAHAPPAAAAEAPKDGAASAPQPPPTFPPGPYLLPPDPPTTDS) form a disordered region. Over residues 463-480 (HAPPAAAAEAPKDGAASA) the composition is skewed to low complexity. Pro residues predominate over residues 481-499 (PQPPPTFPPGPYLLPPDPP). 5 C2H2-type zinc fingers span residues 550-572 (FCCG…ERIH), 578-600 (HQCP…HVVH), 606-628 (YKCE…RQVH), 669-691 (YACS…KEVH), and 697-719 (YGCD…KLVH). Residues 726 to 747 (LLPPAPGGLQPPDGSSGTDAAS) form a disordered region. 9 C2H2-type zinc fingers span residues 792-814 (FSCA…KYVH), 820-842 (LGCG…RRSH), 848-870 (FRCP…QRCH), 876-898 (YRCG…RVVH), 904-926 (FKCG…RRLH), 932-954 (QRCS…QRLH), 960-982 (YRCE…QRAH), 989-1011 (LRCP…LAAH), and 1017-1039 (FRCS…RLAH). Residue Lys802 forms a Glycyl lysine isopeptide (Lys-Gly) (interchain with G-Cter in SUMO2) linkage. Lys1040 is covalently cross-linked (Glycyl lysine isopeptide (Lys-Gly) (interchain with G-Cter in SUMO2)).

Belongs to the krueppel C2H2-type zinc-finger protein family.

The protein localises to the nucleus. In terms of biological role, may be involved in transcriptional regulation. The chain is Zinc finger protein 865 (ZNF865) from Homo sapiens (Human).